The sequence spans 400 residues: MDKSLFEQARPILEQIQDNGFEAYYVGGSVRDYVMGRNIHDIDITTSATPDEIESIFSHTIPVGKEHGTINVVFNDENYEVTTFRAEEDYVDHRRPSGVTFVRDLYEDLQRRDFTMNAIAMDTAYKLYDYFDGQQDINNRIIRTVGIAEERFQEDALRMIRCLRFQSQLSFDIATETFEAMRIQMADIKFLSIERIVIELTKLMRGINVEKSFNHLKSLKAFNYMPYFEHLDMNQINVTEAIDLELLIAIVSVKFDINYSLKPLKLSNRQVKDINQYIQIMNALPSIITKEQLKMFVYDYDTHLIKNVMVAADVLKANDIQGHEPLIVNLQTIDETLHRLPMHNRKDMMVNGGVLMAHLNAKSGPWLKDVLRQIEIAIVTGKVSNEETEILKWVDNHVKI.

Gly-28 and Arg-31 together coordinate ATP. The CTP site is built by Gly-28 and Arg-31. The Mg(2+) site is built by Asp-41 and Asp-43. Arg-112, Asp-155, Arg-158, Arg-161, and Arg-164 together coordinate ATP. Residues Arg-112, Asp-155, Arg-158, Arg-161, and Arg-164 each coordinate CTP.

The protein belongs to the tRNA nucleotidyltransferase/poly(A) polymerase family. Bacterial CCA-adding enzyme type 3 subfamily. Homodimer. Requires Mg(2+) as cofactor.

It catalyses the reaction a tRNA precursor + 2 CTP + ATP = a tRNA with a 3' CCA end + 3 diphosphate. The catalysed reaction is a tRNA with a 3' CCA end + 2 CTP + ATP = a tRNA with a 3' CCACCA end + 3 diphosphate. Its function is as follows. Catalyzes the addition and repair of the essential 3'-terminal CCA sequence in tRNAs without using a nucleic acid template. Adds these three nucleotides in the order of C, C, and A to the tRNA nucleotide-73, using CTP and ATP as substrates and producing inorganic pyrophosphate. tRNA 3'-terminal CCA addition is required both for tRNA processing and repair. Also involved in tRNA surveillance by mediating tandem CCA addition to generate a CCACCA at the 3' terminus of unstable tRNAs. While stable tRNAs receive only 3'-terminal CCA, unstable tRNAs are marked with CCACCA and rapidly degraded. The polypeptide is CCA-adding enzyme (Staphylococcus aureus (strain COL)).